Reading from the N-terminus, the 263-residue chain is Small ribosomal subunit protein eS4, Y isoform 1 (263 aa).

Residues 42-104 enclose the S4 RNA-binding domain; sequence LPLIIFLRNR…TGEHFRLVYD (63 aa).

It belongs to the eukaryotic ribosomal protein eS4 family.

The sequence is that of Small ribosomal subunit protein eS4, Y isoform 1 (RPS4Y1) from Monodelphis domestica (Gray short-tailed opossum).